A 161-amino-acid chain; its full sequence is GTP-dependent dephospho-CoA kinase (161 aa).

6 residues coordinate GTP: Asp37, Ile38, Asp56, Lys58, Glu112, and Asp135.

Belongs to the GTP-dependent DPCK family.

The enzyme catalyses 3'-dephospho-CoA + GTP = GDP + CoA + H(+). It participates in cofactor biosynthesis; coenzyme A biosynthesis. Functionally, catalyzes the GTP-dependent phosphorylation of the 3'-hydroxyl group of dephosphocoenzyme A to form coenzyme A (CoA). The chain is GTP-dependent dephospho-CoA kinase from Methanococcus aeolicus (strain ATCC BAA-1280 / DSM 17508 / OCM 812 / Nankai-3).